Here is a 20-residue protein sequence, read N- to C-terminus: Equinatoxin-1'' (20 aa).

Positions 3–12 (AVAGAVIEGA) are plays an important role in the hemolytic activity. Residues 11 to 20 (GATLTFNVLQ) are N-terminal region.

It belongs to the actinoporin family. Sea anemone subfamily. In terms of assembly, octamer or nonamer in membranes. Monomer in the soluble state.

Its subcellular location is the secreted. The protein resides in the nematocyst. The protein localises to the target cell membrane. Pore-forming protein that forms cations-selective hydrophilic pores of around 1 nm and causes cardiac stimulation and cytolysis. Pore formation is a multi-step process that involves specific recognition of membrane sphingomyelin (but neither cholesterol nor phosphatidylcholine) using aromatic rich region and adjacent phosphocholine (POC) binding site, firm binding to the membrane (mainly driven by hydrophobic interactions) accompanied by the transfer of the N-terminal region to the lipid-water interface and finally pore formation after oligomerization of monomers. Cytolytic effects include red blood cells hemolysis, platelet aggregation and lysis, cytotoxic and cytostatic effects on fibroblasts. Lethality in mammals has been ascribed to severe vasospasm of coronary vessels, cardiac arrhythmia, and inotropic effects. The protein is Equinatoxin-1'' of Actinia equina (Beadlet anemone).